A 229-amino-acid polypeptide reads, in one-letter code: Probable coenzyme A transferase subunit alpha (229 aa).

26-32 (GGFGGVG) serves as a coordination point for CoA.

This sequence belongs to the 3-oxoacid CoA-transferase subunit A family. In terms of assembly, heterodimer of a subunit alpha and a subunit beta.

This is Probable coenzyme A transferase subunit alpha (yodS) from Bacillus subtilis (strain 168).